We begin with the raw amino-acid sequence, 621 residues long: MSATLQSFLPAPKYSALPHSRDDDENDEYDNTEAGPSTSSSSSALVSTSSPSIPPYGQRAAWRPRTQADYANGGAYPECHVAQYPLDMGRNRSAATSNKLAMRIDGEGNKRYDAIVKQSLRPGQTVQTEFKDLVPLSQRTDIKEKDRNSGFERPSHEEVMSNTERTRLALEAITKGKNKPVVPKAGNLPGQQQAAQFIRYTPAQQGAGNGTQRIIKMTEAQRDPLEPPRHRFKKTAAGPPSPPPPVLRSPPRKVTAQEQKDWMIPPAVSNWKNNKGYTIPLDKRLAADASGIQDVVINDNFAQFAEALHLADRHAREEVRQRSIMQQKLAAKEKAAKEEHLRNLAQRAREERAGVSSATPSVLGRDDDVASRLADSDARPTRATPRAEGGMSAMLAGYRSDSDSDESAASDEEDDEGARERDRIREERRRERQRELRMSNMGIEQRTKQLLREQNRDISEKVALGLAKPTASKESMTDSRLFNQGESLAAGYGDEDSYNLYDKPLFSGSSAAAAIYRRPAARGGANDIYSGADDTALEEELGKNDRFGLGQSKFRGVQGDADRDSGSGSAPVRSGPVQFEKDTSDPFAINQFLEDAKRGIKRTSDQDADDARKKLRDEHDS.

5 disordered regions span residues 1-73 (MSAT…YANG), 137-164 (SQRT…SNTE), 220-251 (AQRD…RSPP), 347-438 (RARE…ELRM), and 542-621 (GKND…EHDS). The span at 36 to 51 (PSTSSSSSALVSTSSP) shows a compositional bias: low complexity. 2 stretches are compositionally biased toward basic and acidic residues: residues 140–164 (TDIK…SNTE) and 220–229 (AQRDPLEPPR). Residues 239-248 (PPSPPPPVLR) show a composition bias toward pro residues. Basic and acidic residues predominate over residues 364 to 380 (GRDDDVASRLADSDARP). Over residues 403–417 (DSDESAASDEEDDEG) the composition is skewed to acidic residues. Composition is skewed to basic and acidic residues over residues 418 to 437 (ARER…RELR) and 594 to 621 (EDAK…EHDS).

Belongs to the SNW family. Associated with the spliceosome.

It localises to the nucleus. In terms of biological role, involved in pre-mRNA splicing. This Mycosarcoma maydis (Corn smut fungus) protein is Pre-mRNA-processing protein 45 (PRP45).